We begin with the raw amino-acid sequence, 271 residues long: Chorismate dehydratase (271 aa).

Belongs to the MqnA/MqnD family. MqnA subfamily.

It catalyses the reaction chorismate = 3-[(1-carboxyvinyl)-oxy]benzoate + H2O. It functions in the pathway quinol/quinone metabolism; menaquinone biosynthesis. In terms of biological role, catalyzes the dehydration of chorismate into 3-[(1-carboxyvinyl)oxy]benzoate, a step in the biosynthesis of menaquinone (MK, vitamin K2). The chain is Chorismate dehydratase from Thermus thermophilus (strain ATCC 27634 / DSM 579 / HB8).